The sequence spans 127 residues: Protein ApaG (127 aa).

Positions 3–127 constitute an ApaG domain; sequence EGKKYEIAVK…FILSVPRILH (125 aa).

The sequence is that of Protein ApaG from Nitrosospira multiformis (strain ATCC 25196 / NCIMB 11849 / C 71).